A 294-amino-acid polypeptide reads, in one-letter code: Phosphatidylglycerol--prolipoprotein diacylglyceryl transferase (294 aa).

The next 7 helical transmembrane spans lie at 10–30 (VALALGPIEIHWYGLMYLLAF), 55–75 (LVFYGALGVILGGRIGYVLFY), 91–111 (WEGGMSFHGGFIGVMLGMWFF), 119–139 (AFQVFDFIVPCVPTGLLFGRI), 196–216 (PSQLYEAFAEGLLLFIFLWWY), 224–244 (MAASAVFLLGYGISRFIIEFF), and 258–278 (WMTKGQLLSAPMIIAGLIMLI). Residue Arg138 coordinates a 1,2-diacyl-sn-glycero-3-phospho-(1'-sn-glycerol).

The protein belongs to the Lgt family.

It is found in the cell inner membrane. It catalyses the reaction L-cysteinyl-[prolipoprotein] + a 1,2-diacyl-sn-glycero-3-phospho-(1'-sn-glycerol) = an S-1,2-diacyl-sn-glyceryl-L-cysteinyl-[prolipoprotein] + sn-glycerol 1-phosphate + H(+). The protein operates within protein modification; lipoprotein biosynthesis (diacylglyceryl transfer). Its function is as follows. Catalyzes the transfer of the diacylglyceryl group from phosphatidylglycerol to the sulfhydryl group of the N-terminal cysteine of a prolipoprotein, the first step in the formation of mature lipoproteins. The sequence is that of Phosphatidylglycerol--prolipoprotein diacylglyceryl transferase from Psychrobacter arcticus (strain DSM 17307 / VKM B-2377 / 273-4).